A 167-amino-acid chain; its full sequence is Small ribosomal subunit protein uS5 (167 aa).

Positions L12 to I75 constitute an S5 DRBM domain.

The protein belongs to the universal ribosomal protein uS5 family. In terms of assembly, part of the 30S ribosomal subunit. Contacts proteins S4 and S8.

Its function is as follows. With S4 and S12 plays an important role in translational accuracy. In terms of biological role, located at the back of the 30S subunit body where it stabilizes the conformation of the head with respect to the body. The protein is Small ribosomal subunit protein uS5 of Vibrio parahaemolyticus serotype O3:K6 (strain RIMD 2210633).